Reading from the N-terminus, the 138-residue chain is Basic phospholipase A2 homolog 7 (138 aa).

The first 16 residues, 1 to 16 (MRTLWLMAVLLVGVEG), serve as a signal peptide directing secretion. 6 disulfide bridges follow: Cys42–Cys131, Cys44–Cys60, Cys59–Cys111, Cys65–Cys138, Cys66–Cys104, and Cys91–Cys102. The segment at 121–133 (KKKKINLKLFCKK) is important for membrane-damaging activities in eukaryotes and bacteria; heparin-binding.

Belongs to the phospholipase A2 family. Group II subfamily. K49 sub-subfamily. Expressed by the venom gland.

The protein localises to the secreted. Its function is as follows. Snake venom phospholipase A2 homolog that lacks enzymatic activity. Is myotoxic and displays edema-inducing activities. A model of myotoxic mechanism has been proposed: an apo Lys49-PLA2 is activated by the entrance of a hydrophobic molecule (e.g. fatty acid) at the hydrophobic channel of the protein leading to a reorientation of a monomer. This reorientation causes a transition between 'inactive' to 'active' states, causing alignment of C-terminal and membrane-docking sites (MDoS) side-by-side and putting the membrane-disruption sites (MDiS) in the same plane, exposed to solvent and in a symmetric position for both monomers. The MDoS region stabilizes the toxin on membrane by the interaction of charged residues with phospholipid head groups. Subsequently, the MDiS region destabilizes the membrane with penetration of hydrophobic residues. This insertion causes a disorganization of the membrane, allowing an uncontrolled influx of ions (i.e. calcium and sodium), and eventually triggering irreversible intracellular alterations and cell death. The polypeptide is Basic phospholipase A2 homolog 7 (Craspedocephalus gramineus (Bamboo pit viper)).